A 159-amino-acid chain; its full sequence is 2-C-methyl-D-erythritol 2,4-cyclodiphosphate synthase (159 aa).

The a divalent metal cation site is built by D10 and H12. 4-CDP-2-C-methyl-D-erythritol 2-phosphate is bound by residues 10 to 12 (DVH) and 37 to 38 (HS). H45 serves as a coordination point for a divalent metal cation. Residues 59–61 (DIG), 64–68 (FLDTD), 103–109 (AQAPKML), 135–138 (TTTE), F142, and R145 contribute to the 4-CDP-2-C-methyl-D-erythritol 2-phosphate site.

This sequence belongs to the IspF family. In terms of assembly, homotrimer. A divalent metal cation is required as a cofactor.

The catalysed reaction is 4-CDP-2-C-methyl-D-erythritol 2-phosphate = 2-C-methyl-D-erythritol 2,4-cyclic diphosphate + CMP. It participates in isoprenoid biosynthesis; isopentenyl diphosphate biosynthesis via DXP pathway; isopentenyl diphosphate from 1-deoxy-D-xylulose 5-phosphate: step 4/6. In terms of biological role, involved in the biosynthesis of isopentenyl diphosphate (IPP) and dimethylallyl diphosphate (DMAPP), two major building blocks of isoprenoid compounds. Catalyzes the conversion of 4-diphosphocytidyl-2-C-methyl-D-erythritol 2-phosphate (CDP-ME2P) to 2-C-methyl-D-erythritol 2,4-cyclodiphosphate (ME-CPP) with a corresponding release of cytidine 5-monophosphate (CMP). In Francisella tularensis subsp. holarctica (strain OSU18), this protein is 2-C-methyl-D-erythritol 2,4-cyclodiphosphate synthase.